A 426-amino-acid chain; its full sequence is Vitamin D3 receptor (426 aa).

The nuclear receptor DNA-binding region spans Pro21–Thr96. Residues Cys24, Cys27, Cys41, Cys44, Cys60, Cys66, Cys76, and Cys79 each contribute to the Zn(2+) site. NR C4-type zinc fingers lie at residues Cys24–Cys44 and Cys60–Cys84. Residues Asp97–Glu126 are hinge. An NR LBD domain is found at Glu127–Gly422. Residue Tyr143 coordinates calcitriol. The interval Tyr147 to Val215 is disordered. Over residues Ser175–Ser191 the composition is skewed to low complexity. Polar residues predominate over residues Pro192 to Asp204. Ser235 is a binding site for calcitriol. The tract at residues Lys244–Lys262 is interaction with coactivator LXXLL motif. Positions 272, 276, 304, and 396 each coordinate calcitriol. The 9aaTAD motif lies at Pro415–Asn423.

Belongs to the nuclear hormone receptor family. NR1 subfamily. In terms of assembly, homodimer in the absence of bound vitamin D3. Heterodimer with RXRA after vitamin D3 binding. Interacts with MED1, NCOA1, NCOA2, NCOA3 and NCOA6 coactivators, leading to a strong increase of transcription of target genes. Interacts with the corepressor NCOR1. Interacts with SNW1. Interacts with IRX4, the interaction does not affect its transactivation activity. Interacts with CRY1. Interacts with CRY2 in a ligand-dependent manner. Post-translationally, ubiquitinated by UBR5, leading to its degradation: UBR5 specifically recognizes and binds ligand-bound VDR when it is not associated with coactivators (NCOAs). In presence of NCOAs, the UBR5-degron is not accessible, preventing its ubiquitination and degradation. In terms of tissue distribution, mammary gland, expression increases during lactation. Also found in colon, expression is down-regulated at parturition.

Its subcellular location is the nucleus. It localises to the cytoplasm. Functionally, nuclear receptor for calcitriol, the active form of vitamin D3 which mediates the action of this vitamin on cells. Enters the nucleus upon vitamin D3 binding where it forms heterodimers with the retinoid X receptor/RXR. The VDR-RXR heterodimers bind to specific response elements on DNA and activate the transcription of vitamin D3-responsive target genes. Plays a central role in calcium homeostasis. Also functions as a receptor for the secondary bile acid lithocholic acid (LCA) and its metabolites. This is Vitamin D3 receptor (VDR) from Bos taurus (Bovine).